The primary structure comprises 147 residues: Hemoglobin subunit beta (147 aa).

Residues 3–147 (HWTAEEKQLI…VAHALARKYH (145 aa)) enclose the Globin domain. Heme b contacts are provided by histidine 64 and histidine 93.

The protein belongs to the globin family. In terms of assembly, heterotetramer of 2 alpha (or alpha-D) and 2 beta chains. In terms of tissue distribution, red blood cells.

Functionally, involved in oxygen transport from the lung to the various peripheral tissues. The beta chain is a component of adult hemoglobin A and D. The sequence is that of Hemoglobin subunit beta (HBB) from Gallus gallus (Chicken).